The sequence spans 44 residues: Photosystem I reaction center subunit IX (44 aa).

Residues 7–27 traverse the membrane as a helical segment; the sequence is YLSTAPVLATLWFSSLAGLLI.

The protein belongs to the PsaJ family.

Its subcellular location is the plastid. The protein localises to the chloroplast thylakoid membrane. Its function is as follows. May help in the organization of the PsaE and PsaF subunits. The protein is Photosystem I reaction center subunit IX of Welwitschia mirabilis (Tree tumbo).